Here is a 541-residue protein sequence, read N- to C-terminus: Chaperonin GroEL (541 aa).

ATP contacts are provided by residues 29–32 (TLGP), 86–90 (DGTTT), glycine 413, 477–479 (DAL), and aspartate 493.

The protein belongs to the chaperonin (HSP60) family. As to quaternary structure, forms a cylinder of 14 subunits composed of two heptameric rings stacked back-to-back. Interacts with the co-chaperonin GroES.

Its subcellular location is the cytoplasm. It carries out the reaction ATP + H2O + a folded polypeptide = ADP + phosphate + an unfolded polypeptide.. Functionally, together with its co-chaperonin GroES, plays an essential role in assisting protein folding. The GroEL-GroES system forms a nano-cage that allows encapsulation of the non-native substrate proteins and provides a physical environment optimized to promote and accelerate protein folding. In Clostridium botulinum (strain ATCC 19397 / Type A), this protein is Chaperonin GroEL.